A 527-amino-acid chain; its full sequence is UDP-glucuronosyltransferase 2A3 (527 aa).

The signal sequence occupies residues 1 to 23 (MRSEKSALVFLLLQLFCVGCGFC). Residues 24-486 (GKVLVWPCDM…AAHNLTWFQH (463 aa)) lie on the Extracellular side of the membrane. A glycan (N-linked (GlcNAc...) asparagine) is linked at Asn-313. The helical transmembrane segment at 487–507 (YSIDVIGFLLACVATAIFLFT) threads the bilayer. Topologically, residues 508–523 (KCCLFSCQKFNKTRKI) are cytoplasmic.

The protein belongs to the UDP-glycosyltransferase family.

The protein localises to the membrane. The catalysed reaction is glucuronate acceptor + UDP-alpha-D-glucuronate = acceptor beta-D-glucuronoside + UDP + H(+). UDP-glucuronosyltransferases catalyze phase II biotransformation reactions in which lipophilic substrates are conjugated with glucuronic acid to increase water solubility and enhance excretion. They are of major importance in the conjugation and subsequent elimination of potentially toxic xenobiotics and endogenous compounds. In Pongo abelii (Sumatran orangutan), this protein is UDP-glucuronosyltransferase 2A3 (UGT2A3).